The sequence spans 84 residues: Defensin-like protein 49 (84 aa).

An N-terminal signal peptide occupies residues 1–29 (MGITKSLMIFFHIVLLAVSLSNNIILTSG). Disulfide bonds link cysteine 40-cysteine 82, cysteine 44-cysteine 68, cysteine 54-cysteine 80, and cysteine 58-cysteine 81.

The protein belongs to the DEFL family.

The protein resides in the secreted. This is Defensin-like protein 49 from Arabidopsis thaliana (Mouse-ear cress).